We begin with the raw amino-acid sequence, 370 residues long: Histidinol-phosphate aminotransferase (370 aa).

Lys-223 carries the post-translational modification N6-(pyridoxal phosphate)lysine.

Belongs to the class-II pyridoxal-phosphate-dependent aminotransferase family. Histidinol-phosphate aminotransferase subfamily. As to quaternary structure, homodimer. It depends on pyridoxal 5'-phosphate as a cofactor.

The catalysed reaction is L-histidinol phosphate + 2-oxoglutarate = 3-(imidazol-4-yl)-2-oxopropyl phosphate + L-glutamate. Its pathway is amino-acid biosynthesis; L-histidine biosynthesis; L-histidine from 5-phospho-alpha-D-ribose 1-diphosphate: step 7/9. The sequence is that of Histidinol-phosphate aminotransferase from Methylobacterium nodulans (strain LMG 21967 / CNCM I-2342 / ORS 2060).